The primary structure comprises 64 residues: Probable cytochrome c oxidase subunit 5C-3 (64 aa).

The helical transmembrane segment at 15–34 (SVVKELVIGLTLGLAAGGLW) threads the bilayer.

This sequence belongs to the cytochrome c oxidase subunit 5C family.

It is found in the mitochondrion inner membrane. In terms of biological role, this protein is one of the nuclear-coded polypeptide chains of cytochrome c oxidase, the terminal oxidase in mitochondrial electron transport. The protein is Probable cytochrome c oxidase subunit 5C-3 of Arabidopsis thaliana (Mouse-ear cress).